Reading from the N-terminus, the 1989-residue chain is Exophilin-5 (1989 aa).

The 57-residue stretch at 7–63 (AFDFSFLNDEEARKILQVLERNEELQRAEKDRISKLQKTKRDIRWLQGVTGEWFEEI) folds into the RabBD domain. Disordered stretches follow at residues 93 to 117 (NDPIELPTSRSKNVTNQKKPTPFSS) and 348 to 391 (TQSK…FLRA). Composition is skewed to polar residues over residues 100-111 (TSRSKNVTNQKK) and 359-376 (HQQSPKRTPLSSIIWNRS). Residues 377-389 (DSSRDRENQEEFL) are compositionally biased toward basic and acidic residues. S603 carries the phosphoserine modification. 3 disordered regions span residues 631 to 651 (FSQISDDRRNPQSPNLQNPTV), 806 to 827 (STASLPFIQEHRTPPSFPRTDQ), and 882 to 933 (AALP…NQKN). Residues 641 to 651 (PQSPNLQNPTV) are compositionally biased toward polar residues. S806 and S809 each carry phosphoserine. The span at 891–909 (KNSSLDAPVVPSTTVFSRR) shows a compositional bias: polar residues. The span at 910-927 (SPSDKDPSLGEREEKDNA) shows a compositional bias: basic and acidic residues. Residues S1028 and S1086 each carry the phosphoserine modification. Disordered stretches follow at residues 1094-1113 (EATERMTNVKSSGSTSVRKG), 1124-1152 (SCPSGEPHASTGREGRKKPLTSGMDASEL), and 1365-1493 (EIFS…TNCQ). Polar residues predominate over residues 1098-1110 (RMTNVKSSGSTSV). Phosphoserine is present on S1124. Over residues 1379 to 1390 (SENKKERGKKLQ) the composition is skewed to basic and acidic residues. Residues 1416-1431 (SINSSNSGPSSLPALS) show a composition bias toward low complexity. Residues 1434 to 1447 (NIGNSQTRRSSWEC) are compositionally biased toward polar residues. Residue S1505 is modified to Phosphoserine. Disordered stretches follow at residues 1521-1590 (EETQ…NRSS) and 1644-1737 (PEPT…PITF). Basic and acidic residues-rich tracts occupy residues 1551 to 1560 (ESRKAEDEMQ), 1573 to 1589 (NKNKTNLDDLVKGENRS), and 1658 to 1670 (RLSENGKHVKKSE). Polar residues predominate over residues 1685–1709 (THVSNQKSNSISQRHQNEFKNVSES). S1753, S1768, S1821, and S1851 each carry phosphoserine. Residues 1921–1989 (FLKDDLRNPP…LDENDKESEL (69 aa)) are disordered. The span at 1933-1943 (SESLSSNSPSS) shows a compositional bias: low complexity. Residues 1959–1989 (YEDDPVDSDCDTDTTTDDEYYLDENDKESEL) show a composition bias toward acidic residues.

Interacts with RAB27A. Expressed in keratinocytes.

Its function is as follows. May act as Rab effector protein and play a role in vesicle trafficking. In Homo sapiens (Human), this protein is Exophilin-5.